The sequence spans 302 residues: F-box protein At1g20360 (302 aa).

Residues 1–48 (MNSLPLHLLDQILFRLEPKSLAMMKSTNRTINSHISDPLFESEYFSRL) form the F-box domain.

In Arabidopsis thaliana (Mouse-ear cress), this protein is F-box protein At1g20360.